A 270-amino-acid polypeptide reads, in one-letter code: Putative carbamate hydrolase RutD (270 aa).

It belongs to the AB hydrolase superfamily. Hydrolase RutD family.

It catalyses the reaction carbamate + 2 H(+) = NH4(+) + CO2. Functionally, involved in pyrimidine catabolism. May facilitate the hydrolysis of carbamate, a reaction that can also occur spontaneously. The protein is Putative carbamate hydrolase RutD of Escherichia coli (strain SMS-3-5 / SECEC).